We begin with the raw amino-acid sequence, 340 residues long: DNA-directed RNA polymerase subunit alpha (340 aa).

An alpha N-terminal domain (alpha-NTD) region spans residues 1–236 (MLSLSKNWNT…EQLQLFISFE (236 aa)). The alpha C-terminal domain (alpha-CTD) stretch occupies residues 251–340 (FSPYLLKRVD…LSKRYEDSYN (90 aa)).

The protein belongs to the RNA polymerase alpha chain family. Homodimer. The RNAP catalytic core consists of 2 alpha, 1 beta, 1 beta' and 1 omega subunit. When a sigma factor is associated with the core the holoenzyme is formed, which can initiate transcription.

The catalysed reaction is RNA(n) + a ribonucleoside 5'-triphosphate = RNA(n+1) + diphosphate. In terms of biological role, DNA-dependent RNA polymerase catalyzes the transcription of DNA into RNA using the four ribonucleoside triphosphates as substrates. In Rickettsia rickettsii (strain Iowa), this protein is DNA-directed RNA polymerase subunit alpha.